Consider the following 367-residue polypeptide: Dihydroorotate dehydrogenase (quinone) (367 aa).

FMN is bound by residues 67–71 (AGFDK) and T91. A substrate-binding site is contributed by K71. Position 116–120 (116–120 (NRLGF)) interacts with substrate. Positions 145 and 178 each coordinate FMN. Position 178 (N178) interacts with substrate. Residue S181 is the Nucleophile of the active site. N183 contributes to the substrate binding site. FMN-binding residues include K219 and T247. 248–249 (NT) lines the substrate pocket. FMN contacts are provided by residues G269, G298, and 319–320 (YT).

This sequence belongs to the dihydroorotate dehydrogenase family. Type 2 subfamily. Monomer. It depends on FMN as a cofactor.

The protein resides in the cell membrane. It carries out the reaction (S)-dihydroorotate + a quinone = orotate + a quinol. The protein operates within pyrimidine metabolism; UMP biosynthesis via de novo pathway; orotate from (S)-dihydroorotate (quinone route): step 1/1. Catalyzes the conversion of dihydroorotate to orotate with quinone as electron acceptor. In Roseiflexus castenholzii (strain DSM 13941 / HLO8), this protein is Dihydroorotate dehydrogenase (quinone).